The primary structure comprises 305 residues: Calponin-2 (305 aa).

Residue Ser2 is modified to N-acetylserine. N6-acetyllysine is present on residues Lys8 and Lys25. Residues Pro28–Lys132 enclose the Calponin-homology (CH) domain. Ser138 bears the Phosphoserine mark. 3 Calponin-like repeats span residues Ile166–Tyr191, Ile206–Tyr231, and Met245–Tyr269.

Belongs to the calponin family. Smooth muscle, and tissues containing significant amounts of smooth muscle.

Functionally, thin filament-associated protein that is implicated in the regulation and modulation of smooth muscle contraction. It is capable of binding to actin, calmodulin and tropomyosin. The interaction of calponin with actin inhibits the actomyosin Mg-ATPase activity. The sequence is that of Calponin-2 (Cnn2) from Mus musculus (Mouse).